The following is a 373-amino-acid chain: Melanoma-associated antigen C2 (373 aa).

The interval 1-102 is disordered; the sequence is MPPVPGVPFR…QGPSQSPLSS (102 aa). Residues 40–60 show a composition bias toward low complexity; the sequence is SSASSTLYLVFSPSSFSTSSS. Over residues 85–94 the composition is skewed to pro residues; it reads SSPPQGPPQG. An interaction with TRIM28 region spans residues 135 to 373; the sequence is SSFTYTLDEK…VMSSNVSFSE (239 aa). Residues 141 to 336 enclose the MAGE domain; it reads LDEKVAELVE…SSFPSWYKDA (196 aa).

In terms of assembly, interacts with TRIM28 and UBE2H. Not expressed in normal tissues, except in germ cells in the seminiferous tubules and in Purkinje cells of the cerebellum. Expressed in various tumors, including melanoma, lymphoma, as well as pancreatic cancer, mammary gland cancer, non-small cell lung cancer and liver cancer. In hepatocellular carcinoma, there is an inverse correlation between tumor differentiation and protein expression, i.e. the lower the differentiation, the higher percentage of expression.

The protein resides in the cytoplasm. Its subcellular location is the nucleus. In terms of biological role, proposed to enhance ubiquitin ligase activity of RING-type zinc finger-containing E3 ubiquitin-protein ligases. In vitro enhances ubiquitin ligase activity of TRIM28 and stimulates p53/TP53 ubiquitination in presence of Ubl-conjugating enzyme UBE2H leading to p53/TP53 degradation. Proposed to act through recruitment and/or stabilization of the Ubl-conjugating enzymes (E2) at the E3:substrate complex. This Homo sapiens (Human) protein is Melanoma-associated antigen C2 (MAGEC2).